The chain runs to 525 residues: Bifunctional purine biosynthesis protein PurH (525 aa).

Residues 1–148 form the MGS-like domain; that stretch reads MPSNNLIKNA…KNYKNVIVIV (148 aa).

It belongs to the PurH family.

It carries out the reaction (6R)-10-formyltetrahydrofolate + 5-amino-1-(5-phospho-beta-D-ribosyl)imidazole-4-carboxamide = 5-formamido-1-(5-phospho-D-ribosyl)imidazole-4-carboxamide + (6S)-5,6,7,8-tetrahydrofolate. The enzyme catalyses IMP + H2O = 5-formamido-1-(5-phospho-D-ribosyl)imidazole-4-carboxamide. Its pathway is purine metabolism; IMP biosynthesis via de novo pathway; 5-formamido-1-(5-phospho-D-ribosyl)imidazole-4-carboxamide from 5-amino-1-(5-phospho-D-ribosyl)imidazole-4-carboxamide (10-formyl THF route): step 1/1. It participates in purine metabolism; IMP biosynthesis via de novo pathway; IMP from 5-formamido-1-(5-phospho-D-ribosyl)imidazole-4-carboxamide: step 1/1. This is Bifunctional purine biosynthesis protein PurH from Buchnera aphidicola subsp. Acyrthosiphon pisum (strain APS) (Acyrthosiphon pisum symbiotic bacterium).